We begin with the raw amino-acid sequence, 177 residues long: Large ribosomal subunit protein uL10 (177 aa).

The protein belongs to the universal ribosomal protein uL10 family. As to quaternary structure, part of the ribosomal stalk of the 50S ribosomal subunit. The N-terminus interacts with L11 and the large rRNA to form the base of the stalk. The C-terminus forms an elongated spine to which L12 dimers bind in a sequential fashion forming a multimeric L10(L12)X complex.

Its function is as follows. Forms part of the ribosomal stalk, playing a central role in the interaction of the ribosome with GTP-bound translation factors. The sequence is that of Large ribosomal subunit protein uL10 from Leptospira interrogans serogroup Icterohaemorrhagiae serovar copenhageni (strain Fiocruz L1-130).